We begin with the raw amino-acid sequence, 171 residues long: Large ribosomal subunit protein uL10 (171 aa).

Belongs to the universal ribosomal protein uL10 family. In terms of assembly, part of the ribosomal stalk of the 50S ribosomal subunit. The N-terminus interacts with L11 and the large rRNA to form the base of the stalk. The C-terminus forms an elongated spine to which L12 dimers bind in a sequential fashion forming a multimeric L10(L12)X complex.

Forms part of the ribosomal stalk, playing a central role in the interaction of the ribosome with GTP-bound translation factors. The polypeptide is Large ribosomal subunit protein uL10 (Corynebacterium efficiens (strain DSM 44549 / YS-314 / AJ 12310 / JCM 11189 / NBRC 100395)).